The chain runs to 507 residues: Alkyl hydroperoxide reductase subunit F (507 aa).

Position 207-222 (207-222 (DVLIVGGGPASGSAAI)) interacts with FAD. Cys335 and Cys338 are joined by a disulfide. 347 to 361 (DVAVIGGGNSGVEAA) is an NAD(+) binding site. Position 467–477 (467–477 (TNVPGIFAAGD)) interacts with FAD.

This sequence belongs to the class-II pyridine nucleotide-disulfide oxidoreductase family. In terms of assembly, homodimer. Requires FAD as cofactor.

Functionally, serves to protect the cell against DNA damage by alkyl hydroperoxides. It can use either NADH or NADPH as electron donor for direct reduction of redox dyes or of alkyl hydroperoxides when combined with the AhpC protein. The protein is Alkyl hydroperoxide reductase subunit F (ahpF) of Staphylococcus epidermidis (strain ATCC 35984 / DSM 28319 / BCRC 17069 / CCUG 31568 / BM 3577 / RP62A).